The sequence spans 174 residues: UPF0340 protein SAB1998c (174 aa).

Belongs to the UPF0340 family.

This is UPF0340 protein SAB1998c from Staphylococcus aureus (strain bovine RF122 / ET3-1).